A 247-amino-acid chain; its full sequence is Carboxy-S-adenosyl-L-methionine synthase (247 aa).

Residues tyrosine 39, 64–66 (GCS), 89–90 (DN), 117–118 (DI), asparagine 132, and arginine 199 each bind S-adenosyl-L-methionine.

The protein belongs to the class I-like SAM-binding methyltransferase superfamily. Cx-SAM synthase family. In terms of assembly, homodimer.

The catalysed reaction is prephenate + S-adenosyl-L-methionine = carboxy-S-adenosyl-L-methionine + 3-phenylpyruvate + H2O. In terms of biological role, catalyzes the conversion of S-adenosyl-L-methionine (SAM) to carboxy-S-adenosyl-L-methionine (Cx-SAM). The polypeptide is Carboxy-S-adenosyl-L-methionine synthase (Shigella boydii serotype 4 (strain Sb227)).